Reading from the N-terminus, the 166-residue chain is Phospholipase A2 inhibitor clone 11 (166 aa).

Residues 1–19 (MRLILLSGLLLLGIFLANG) form the signal peptide. The C-type lectin domain occupies 46–161 (LKGSFLIVHK…CDDNLLVVCE (116 aa)). Intrachain disulfides connect C83/C160 and C138/C152. N122 carries N-linked (GlcNAc...) asparagine glycosylation.

The protein belongs to the alpha-type phospholipase A2 inhibitor family. In terms of assembly, homotrimer; non-covalently linked. As to expression, expressed by the liver.

It is found in the secreted. In terms of biological role, this phospholipase A2 inhibitor binds directly phospholipase A2 in the presence or absence of calcium. The sequence is that of Phospholipase A2 inhibitor clone 11 from Bothrops neuwiedi (Neuwied's lancehead).